The chain runs to 393 residues: Beta-ureidopropionase (393 aa).

Residues 72-344 (VRVGLVQNRI…DGLLVTELNL (273 aa)) form the CN hydrolase domain. E119 (proton acceptor) is an active-site residue. The Proton donor role is filled by K196. C233 (nucleophile) is an active-site residue. Phosphoserine is present on S378.

It belongs to the carbon-nitrogen hydrolase superfamily. BUP family. Homodimer, homotetramer, homooctamer; can also form higher homooligomers.

The protein localises to the cytoplasm. It carries out the reaction 3-(carbamoylamino)propanoate + H2O + 2 H(+) = beta-alanine + NH4(+) + CO2. It catalyses the reaction 3-(carbamoylamino)-2-methylpropanoate + H2O + 2 H(+) = (R)-3-amino-2-methylpropanoate + NH4(+) + CO2. It participates in amino-acid biosynthesis; beta-alanine biosynthesis. In terms of biological role, catalyzes a late step in pyrimidine degradation. Converts N-carbamoyl-beta-alanine (3-ureidopropanoate) into beta-alanine, ammonia and carbon dioxide. Likewise, converts N-carbamoyl-beta-aminoisobutyrate (3-ureidoisobutyrate) into beta-aminoisobutyrate, ammonia and carbon dioxide. This Mus musculus (Mouse) protein is Beta-ureidopropionase (Upb1).